The primary structure comprises 628 residues: Probable potassium transport system protein Kup (628 aa).

Transmembrane regions (helical) follow at residues 20-40 (ALLTLGALGVVFGDIGTSPLY), 63-83 (IISMVLWTITLIVTVKYVMLV), 110-130 (FVAVAGMLGAALFYGDVVITP), 151-171 (FILPISLAVLIAIFAIQPLGT), 178-198 (FGPIMLLWFVTLAGLGIPQII), 212-232 (ALGLIVAEPFQAFVLLGAVVL), 256-276 (WFCVVMPALILTYLGQGALVI), 296-316 (IPLVILATIATVIASQAVISG), 346-366 (IYMPLVNGLLFVSVMVVVLVF), 375-395 (AYGLAVTGTLVLVSVLYLIYV), 398-418 (TWWKTALFIVFIGIPEVLLFA), and 422-442 (TKIHDGGWLPLLTAAVLIVVM).

It belongs to the HAK/KUP transporter (TC 2.A.72) family.

It localises to the cell membrane. The enzyme catalyses K(+)(in) + H(+)(in) = K(+)(out) + H(+)(out). Its function is as follows. Transport of potassium into the cell. Likely operates as a K(+):H(+) symporter. In Corynebacterium glutamicum (strain R), this protein is Probable potassium transport system protein Kup.